The following is a 131-amino-acid chain: Hypocretin neuropeptide precursor (131 aa).

The first 33 residues, 1–33 (MNLPSTKVSWAAVTLLLLLLLLPPALLSSGAAA), serve as a signal peptide directing secretion. Q34 bears the Pyrrolidone carboxylic acid mark. 2 disulfides stabilise this stretch: C39/C45 and C40/C47. At L66 the chain carries Leucine amide. Methionine amide is present on M97. The propeptide at 98–131 (GRRAGAEPAPRPCLGRRCSAPAAASVAPGGQSGI) is removed in mature form.

The protein belongs to the orexin family. Specific enzymatic cleavages at paired basic residues yield the different active peptides. As to expression, abundantly expressed in subthalamic nucleus but undetectable in other brain regions tested (hypothalamus was not tested) and in heart, placenta, lung, liver, skeletal muscle, kidney and pancreas.

It localises to the rough endoplasmic reticulum. It is found in the cytoplasmic vesicle. Its subcellular location is the synapse. In terms of biological role, neuropeptides that play a significant role in the regulation of food intake and sleep-wakefulness, possibly by coordinating the complex behavioral and physiologic responses of these complementary homeostatic functions. A broader role in the homeostatic regulation of energy metabolism, autonomic function, hormonal balance and the regulation of body fluids, is also suggested. Its function is as follows. Binds to orexin receptors HCRTR1/OX1R and HCRTR2/OX2R with a high affinity. Stimulates food intake. Modulates pituitary luteinizing hormone secretion in an ovarian steroid-dependent manner. Binds to orexin receptor HCRTR2/OX2R only. Stimulates food intake. Modulates pituitary luteinizing hormone secretion in an ovarian steroid-dependent manner. This chain is Hypocretin neuropeptide precursor, found in Homo sapiens (Human).